A 764-amino-acid polypeptide reads, in one-letter code: Nucleolar transcription factor 1 (764 aa).

N-acetylmethionine is present on methionine 1. The segment at 1-21 is disordered; sequence MNGEADCPTDLEMAAPKGQDR. 2 consecutive DNA-binding regions (HMG box) follow at residues 112 to 180 and 196 to 264; these read PKKP…ARFR and PEKP…RDYI. Threonine 201 is modified (phosphothreonine). Phosphoserine occurs at positions 273, 336, 364, 389, 412, 433, 435, 484, 495, 546, 584, and 638. Residues 298–362 constitute a DNA-binding region (HMG box 3); it reads TKPPPNSYSL…DYEVELLRFL (65 aa). A disordered region spans residues 381 to 411; sequence NINKKQATSPASKKPAQEGGKGGSEKPKRPV. DNA-binding regions (HMG box) lie at residues 407–475, 482–549, and 568–634; these read PKRP…GGER, PESP…SEMR, and KKPP…DLWV. Positions 459 to 487 are disordered; sequence REAALKAQSERKPGGEREERGKLPESPKR. Positions 546 to 576 are disordered; the sequence is SEMRAPPAATNSSKKMKFQGEPKKPPMNGYQ. A disordered region spans residues 648–764; sequence YISNKRKSMT…SGDSSDSDSN (117 aa). Residues 664 to 674 are compositionally biased toward polar residues; it reads PKSSRTTLQSK. A compositionally biased stretch (acidic residues) spans 677-745; sequence SEEDDEEDED…DDDEDEDNES (69 aa). Residues 746–758 are compositionally biased toward low complexity; that stretch reads EGSSSSSSSSGDS.

As to quaternary structure, homodimer. Part of Pol I pre-initiation complex (PIC), in which Pol I core assembles with RRN3 and promoter-bound UTBF and SL1/TIF-IB complex. Interacts with TOP2A in the context of Pol I complex. Interacts with TBP. Interacts with TAF1A. Interacts with RASL11A. Binds to IRS1 and PIK3CA. Interacts with DHX33. Interacts with PHF6. Interacts with CEBPA (isoform 1 and isoform 4). Interacts with DDX11. Interacts with NOP53. Interacts with ALKBH2. In terms of processing, phosphorylated and activated by PIK3CA.

The protein resides in the nucleus. The protein localises to the nucleolus. Recognizes the ribosomal RNA gene promoter and activates transcription mediated by RNA polymerase I (Pol I) through cooperative interactions with the transcription factor SL1/TIF-IB complex. It binds specifically to the upstream control element and can activate Pol I promoter escape. The polypeptide is Nucleolar transcription factor 1 (UBTF) (Homo sapiens (Human)).